The sequence spans 246 residues: MFLKTPNWETVNETPKSRVLTINELISPNLDTESNSLLATPARKYFKTSISEAQDSPTSAPSPDGNEDPTYQYNVQFHFPGPITPTTPRSKNAEMFPSPTPPLVSPTAVIEEENDDSVREFSRTLKSRLNCAMVKLSKEHEQVALIPPPPTEKIRKGSYSNKFAAKHRRCHSLDESKKFLSSLEDSSAHAAFLKAISSKHAKSNRVDNVNVSPLRWSSHRRTQSTQENSLQEVVAIDTLLKMSSSD.

Over residues 49 to 61 (SISEAQDSPTSAP) the composition is skewed to polar residues. Disordered regions lie at residues 49-68 (SISE…GNED) and 200-229 (HAKS…QENS). Residue Ser212 is modified to Phosphoserine.

As to quaternary structure, interacts with CLN2. Post-translationally, phosphorylated by CDC28, probably in association with G1 cyclin CLN2.

It is found in the cytoplasm. Weakly suppresses a RAD53 null mutation when overexpressed. This is Protein SRL3 (SRL3) from Saccharomyces cerevisiae (strain ATCC 204508 / S288c) (Baker's yeast).